A 460-amino-acid chain; its full sequence is Fumarate hydratase class II (460 aa).

Residues 95–97, 126–129, 136–138, and threonine 184 each bind substrate; these read SGT, HPND, and SSN. Histidine 185 functions as the Proton donor/acceptor in the catalytic mechanism. Serine 315 is a catalytic residue. Substrate is bound by residues serine 316 and 321–323; that span reads KVN.

It belongs to the class-II fumarase/aspartase family. Fumarase subfamily. As to quaternary structure, homotetramer.

It is found in the cytoplasm. The enzyme catalyses (S)-malate = fumarate + H2O. It functions in the pathway carbohydrate metabolism; tricarboxylic acid cycle; (S)-malate from fumarate: step 1/1. In terms of biological role, involved in the TCA cycle. Catalyzes the stereospecific interconversion of fumarate to L-malate. The protein is Fumarate hydratase class II of Chlamydia pneumoniae (Chlamydophila pneumoniae).